The following is a 415-amino-acid chain: uncharacterized protein (415 aa).

A TRAM domain is found at 1 to 52 (MQDLTINAIGAQGDGLARTADGKPAFVPLTLPGEVVRAKMDGARGEVVEILA). The [4Fe-4S] cluster site is built by Cys62, Cys68, Cys71, and Cys147. S-adenosyl-L-methionine is bound by residues Gln252, Tyr279, Glu299, and Asp347. The active-site Nucleophile is Cys373.

It belongs to the class I-like SAM-binding methyltransferase superfamily. RNA M5U methyltransferase family.

This is an uncharacterized protein from Caulobacter vibrioides (strain ATCC 19089 / CIP 103742 / CB 15) (Caulobacter crescentus).